Here is a 287-residue protein sequence, read N- to C-terminus: Eukaryotic translation initiation factor 3 subunit G (287 aa).

Positions glutamate 163–glutamate 207 are disordered. In terms of domain architecture, RRM spans asparagine 208 to phenylalanine 286.

Belongs to the eIF-3 subunit G family. As to quaternary structure, component of the eukaryotic translation initiation factor 3 (eIF-3) complex.

It localises to the cytoplasm. In terms of biological role, RNA-binding component of the eukaryotic translation initiation factor 3 (eIF-3) complex, which is involved in protein synthesis of a specialized repertoire of mRNAs and, together with other initiation factors, stimulates binding of mRNA and methionyl-tRNAi to the 40S ribosome. The eIF-3 complex specifically targets and initiates translation of a subset of mRNAs involved in cell proliferation. This subunit can bind 18S rRNA. The chain is Eukaryotic translation initiation factor 3 subunit G from Brugia malayi (Filarial nematode worm).